A 101-amino-acid chain; its full sequence is Urease subunit beta (101 aa).

The protein belongs to the urease beta subunit family. Heterotrimer of UreA (gamma), UreB (beta) and UreC (alpha) subunits. Three heterotrimers associate to form the active enzyme.

The protein resides in the cytoplasm. It catalyses the reaction urea + 2 H2O + H(+) = hydrogencarbonate + 2 NH4(+). The protein operates within nitrogen metabolism; urea degradation; CO(2) and NH(3) from urea (urease route): step 1/1. This chain is Urease subunit beta, found in Ralstonia nicotianae (strain ATCC BAA-1114 / GMI1000) (Ralstonia solanacearum).